The sequence spans 317 residues: Transcriptional regulator LsrR (317 aa).

A DNA-binding region (H-T-H motif) is located at residues Gln33–Gln56.

Belongs to the SorC transcriptional regulatory family.

It localises to the cytoplasm. With respect to regulation, inactivated by phosphorylated autoinducer-2 (phospho-AI-2). Phospho-AI-2 acts by binding to LsrR, which is then unable to bind to the promoter regions, allowing the transcription of the target genes. Transcriptional regulator that represses the expression of the lsr operon in the absence of the quorum-sensing signaling molecule autoinducer 2 (AI-2). It also represses the expression of the lsrRK operon. Acts by binding directly to the lsrA and lsrR promoter regions. In the presence of phosphorylated autoinducer-2 (phospho-AI-2), LsrR is inactivated, leading to the transcription of the genes. This chain is Transcriptional regulator LsrR (lsrR), found in Escherichia coli (strain SMS-3-5 / SECEC).